We begin with the raw amino-acid sequence, 579 residues long: V-type ATP synthase alpha chain (579 aa).

227–234 serves as a coordination point for ATP; that stretch reads GGFGTGKT.

This sequence belongs to the ATPase alpha/beta chains family.

The enzyme catalyses ATP + H2O + 4 H(+)(in) = ADP + phosphate + 5 H(+)(out). Its function is as follows. Produces ATP from ADP in the presence of a proton gradient across the membrane. The V-type alpha chain is a catalytic subunit. The chain is V-type ATP synthase alpha chain from Anaeromyxobacter dehalogenans (strain 2CP-1 / ATCC BAA-258).